Here is a 184-residue protein sequence, read N- to C-terminus: GTP-binding protein Rheb (184 aa).

Residue K8 forms a Glycyl lysine isopeptide (Lys-Gly) (interchain with G-Cter in ubiquitin) linkage. S16 and V17 together coordinate GDP. S16 provides a ligand contact to GTP. GTP contacts are provided by G18, K19, S20, S21, V32, Y35, T38, N119, and D122. K19, S20, and S21 together coordinate GDP. Residue S20 participates in Mg(2+) binding. Residues 35–43 carry the Effector region motif; the sequence is YDPTIENTF. A GDP-binding site is contributed by T38. A Mg(2+)-binding site is contributed by T38. D122 contributes to the GDP binding site. The residue at position 130 (S130) is a Phosphoserine; by MAPKAPK5. A150 contributes to the GDP binding site. A150 contacts GTP. C181 is modified (cysteine methyl ester). C181 carries the S-farnesyl cysteine lipid modification. Residues 182-184 constitute a propeptide, removed in mature form; the sequence is SVM.

The protein belongs to the small GTPase superfamily. Rheb family. In terms of assembly, associates with the mTORC1 complex (MTOR, MLST8 and RPTOR) in a guanyl nucleotide-independent manner. Interacts with TSC2. Interacts with MCRS1; the interaction maintains RHEB at the lysosome in its active GTP-bound form and prevents its interaction with the mTORC1 complex inhibitor TSC2, ensuring activation of the mTORC1 complex by RHEB. Interacts (when prenylated) with PDE6D; this promotes release from membranes. Post-translationally, farnesylation is important for efficiently activating mTORC1-mediated signaling. Polyubiquitinated in response to amino acid, promoting its interaction with MTOR and mTORC1 activation. Deubiquitination by ATXN3 promotes recruitment of the TSC-TBC complex and RHEB inactivation by TSC2. Monoubiquitinated at Lys-8 by RNF152, promoting its association with the TSC-TBC complex. Deubiquitinated at Lys-8 by USP4, promoting mTORC1 activation. In terms of processing, phosphorylation by MAPKAPK5 impairs GTP-binding and inactivation. As to expression, expressed at high levels in normal adult cortex as well as a number of peripheral tissues, including lung and intestine.

Its subcellular location is the endomembrane system. It localises to the lysosome membrane. The protein resides in the golgi apparatus membrane. The protein localises to the endoplasmic reticulum membrane. It is found in the cytoplasm. Its subcellular location is the cytosol. The catalysed reaction is GTP + H2O = GDP + phosphate + H(+). Its activity is regulated as follows. Alternates between an inactive form bound to GDP and an active form bound to GTP. Inactivated by the TSC-TBC complex via the GTPase activating protein (GAP) domain of TSC2. Autoinhibited by Tyr-35, which constrains the active site conformation, restricting the access of the catalytic Asp-65 to the nucleotide-binding pocket. Its function is as follows. Small GTPase that acts as an allosteric activator of the canonical mTORC1 complex, an evolutionarily conserved central nutrient sensor that stimulates anabolic reactions and macromolecule biosynthesis to promote cellular biomass generation and growth. In response to nutrients, growth factors or amino acids, specifically activates the protein kinase activity of MTOR, the catalytic component of the mTORC1 complex: acts by causing a conformational change that allows the alignment of residues in the active site of MTOR, thereby enhancing the phosphorylation of ribosomal protein S6 kinase (RPS6KB1 and RPS6KB2) and EIF4EBP1 (4E-BP1). RHEB is also required for localization of the TSC-TBC complex to lysosomal membranes. In response to starvation, RHEB is inactivated by the TSC-TBC complex, preventing activation of mTORC1. Has low intrinsic GTPase activity. In Rattus norvegicus (Rat), this protein is GTP-binding protein Rheb.